The following is a 726-amino-acid chain: Catalase-peroxidase (726 aa).

The tract at residues 1 to 33 (MSTTDDTHNTLSTGKCPFHQGGHDRSAGAGTAS) is disordered. The segment at residues 105–226 (WHGAGTYRSI…LGATEMGLIY (122 aa)) is a cross-link (tryptophyl-tyrosyl-methioninium (Trp-Tyr) (with M-252)). The active-site Proton acceptor is histidine 106. The segment at residues 226-252 (YVNPEGPDHSGEPLSAAAAIRATFGNM) is a cross-link (tryptophyl-tyrosyl-methioninium (Tyr-Met) (with W-105)). Histidine 267 provides a ligand contact to heme b.

This sequence belongs to the peroxidase family. Peroxidase/catalase subfamily. In terms of assembly, homodimer or homotetramer. Heme b is required as a cofactor. Post-translationally, formation of the three residue Trp-Tyr-Met cross-link is important for the catalase, but not the peroxidase activity of the enzyme.

It carries out the reaction H2O2 + AH2 = A + 2 H2O. The catalysed reaction is 2 H2O2 = O2 + 2 H2O. Functionally, bifunctional enzyme with both catalase and broad-spectrum peroxidase activity. This chain is Catalase-peroxidase, found in Salmonella heidelberg (strain SL476).